Here is a 458-residue protein sequence, read N- to C-terminus: ATP synthase subunit beta (458 aa).

148 to 155 is a binding site for ATP; sequence GGAGVGKT.

It belongs to the ATPase alpha/beta chains family. F-type ATPases have 2 components, CF(1) - the catalytic core - and CF(0) - the membrane proton channel. CF(1) has five subunits: alpha(3), beta(3), gamma(1), delta(1), epsilon(1). CF(0) has three main subunits: a(1), b(2) and c(9-12). The alpha and beta chains form an alternating ring which encloses part of the gamma chain. CF(1) is attached to CF(0) by a central stalk formed by the gamma and epsilon chains, while a peripheral stalk is formed by the delta and b chains.

It is found in the cell inner membrane. The enzyme catalyses ATP + H2O + 4 H(+)(in) = ADP + phosphate + 5 H(+)(out). In terms of biological role, produces ATP from ADP in the presence of a proton gradient across the membrane. The catalytic sites are hosted primarily by the beta subunits. In Shewanella woodyi (strain ATCC 51908 / MS32), this protein is ATP synthase subunit beta.